The following is a 179-amino-acid chain: Peptidyl-tRNA hydrolase 2, mitochondrial (179 aa).

Residues 15–37 traverse the membrane as a helical segment; sequence STLGLAVGVACGMCLGWSLRVCF. Residues Lys47, Lys76, Lys81, Lys95, Lys106, Lys115, Lys171, and Lys177 each participate in a glycyl lysine isopeptide (Lys-Gly) (interchain with G-Cter in ubiquitin) cross-link.

This sequence belongs to the PTH2 family. Monomer. In terms of processing, ubiquitinated by PRKN during mitophagy, leading to its degradation and enhancement of mitophagy. Deubiquitinated by USP30.

The protein resides in the mitochondrion outer membrane. The enzyme catalyses an N-acyl-L-alpha-aminoacyl-tRNA + H2O = an N-acyl-L-amino acid + a tRNA + H(+). Its function is as follows. Peptidyl-tRNA hydrolase which releases tRNAs from the ribosome during protein synthesis. Promotes caspase-independent apoptosis by regulating the function of two transcriptional regulators, AES and TLE1. The polypeptide is Peptidyl-tRNA hydrolase 2, mitochondrial (PTRH2) (Homo sapiens (Human)).